The following is a 339-amino-acid chain: Probable E3 ubiquitin-protein ligase BAH1-like 1 (339 aa).

The region spanning 1 to 163 (MKFGAIYEEY…GSVSGRDFKS (163 aa)) is the SPX domain. The segment at 235–284 (CPICLDTLFNPYALSCGHLFCKGCACGAASVYIFQGVKSAPPEAKCPVCR) adopts an RING-type zinc-finger fold.

The protein belongs to the RING-type zinc finger family.

It carries out the reaction S-ubiquitinyl-[E2 ubiquitin-conjugating enzyme]-L-cysteine + [acceptor protein]-L-lysine = [E2 ubiquitin-conjugating enzyme]-L-cysteine + N(6)-ubiquitinyl-[acceptor protein]-L-lysine.. It functions in the pathway protein modification; protein ubiquitination. This chain is Probable E3 ubiquitin-protein ligase BAH1-like 1, found in Oryza sativa subsp. indica (Rice).